Here is a 298-residue protein sequence, read N- to C-terminus: Glycine--tRNA ligase alpha subunit (298 aa).

Belongs to the class-II aminoacyl-tRNA synthetase family. Tetramer of two alpha and two beta subunits.

Its subcellular location is the cytoplasm. The enzyme catalyses tRNA(Gly) + glycine + ATP = glycyl-tRNA(Gly) + AMP + diphosphate. In Helicobacter hepaticus (strain ATCC 51449 / 3B1), this protein is Glycine--tRNA ligase alpha subunit.